The chain runs to 229 residues: Potassium/proton antiporter CemA (229 aa).

A run of 3 helical transmembrane segments spans residues Phe7–Phe27, Met106–Trp126, and Ile189–Ile209.

This sequence belongs to the CemA family.

It is found in the plastid membrane. The enzyme catalyses K(+)(in) + H(+)(out) = K(+)(out) + H(+)(in). Functionally, may be involved in proton extrusion. The chain is Potassium/proton antiporter CemA from Cuscuta reflexa (Southern Asian dodder).